A 232-amino-acid polypeptide reads, in one-letter code: LRRN4 C-terminal-like protein (232 aa).

A signal peptide spans 1–22 (MPHSPCLLWLLAVTSLVPGTQP). The Extracellular segment spans residues 23 to 189 (LVAGDLEGDE…RLTVPPRPLT (167 aa)). A Fibronectin type-III domain is found at 77-172 (PPHPPRLGEV…GAEGLDSADG (96 aa)). The N-linked (GlcNAc...) asparagine glycan is linked to Asn127. The chain crosses the membrane as a helical span at residues 190 to 210 (LLHAAMGVGSALALLSCSALV). The Cytoplasmic portion of the chain corresponds to 211–232 (WHFCLRQRWGCPRRGRPSHAGL).

It is found in the membrane. This chain is LRRN4 C-terminal-like protein (LRRN4CL), found in Bos taurus (Bovine).